Consider the following 153-residue polypeptide: Protein SREK1IP1 (153 aa).

The CCHC-type zinc finger occupies 13-30 (AGCRKCGYPGHLTFECRN). The segment at 44–153 (VSSTSSEDSD…SPNRSEVTKK (110 aa)) is disordered. Position 52 is a phosphoserine (serine 52). The span at 66–84 (QEKRINEEEEKKKEKSREK) shows a compositional bias: basic and acidic residues. Residues 85–94 (IKLKKKRKRS) show a composition bias toward basic residues. 2 positions are modified to phosphoserine: serine 96 and serine 97. Positions 106–141 (QKKQKYQKKEKKKEKKNKSKKGKHHKKEKKKRKKEK) are enriched in basic residues.

Interacts with SREK1/SFRS12.

Possible splicing regulator involved in the control of cellular survival. The protein is Protein SREK1IP1 (Srek1ip1) of Rattus norvegicus (Rat).